Here is a 341-residue protein sequence, read N- to C-terminus: Protein BEARSKIN2 (341 aa).

The NAC domain maps to 9–160; sequence VPPGFRFHPT…GWVVCRVFMK (152 aa). A DNA-binding region spans residues 109-166; it reads IGMRKTLVFYKGRAPHGQKTDWIMHEYRLEDADDPQANPSEDGWVVCRVFMKKNLFKV.

In terms of tissue distribution, expressed throughout the root cap, in both columella (COL) and lateral root cap (LRC) cells, with higher levels in the COL-adjoining LRC than the upper LRC. Also present at low levels expression in the tips of cotyledons and the cotyledon vasculature, as weel as in vasculature of the first pair of true leaves and at the hydathodes.

Its subcellular location is the nucleus. Its function is as follows. Transcription activator. Together with BRN1 and SMB, regulates cellular maturation of root cap. Promotes the expression of genes involved in secondary cell walls (SCW) biosynthesis. This chain is Protein BEARSKIN2 (BRN2), found in Arabidopsis thaliana (Mouse-ear cress).